Consider the following 129-residue polypeptide: Type II secretion system protein I (129 aa).

Residues 1–6 (MKRARG) constitute a propeptide, leader sequence. Position 7 is an N-methylphenylalanine (Phe-7). Residues 7–27 (FTLLEVLVALAIFAMVAASVL) traverse the membrane as a helical segment.

Belongs to the GSP I family. As to quaternary structure, type II secretion is composed of four main components: the outer membrane complex, the inner membrane complex, the cytoplasmic secretion ATPase and the periplasm-spanning pseudopilus. Forms the tip of the type II pseudopilus by interacting with XcpU, XcpW and XcpX. Interacts with core component XcpT. Cleaved by prepilin peptidase. Post-translationally, methylated by prepilin peptidase at the amino group of the N-terminal phenylalanine once the leader sequence is cleaved by prepilin peptidase.

It is found in the cell inner membrane. Functionally, component of the type II secretion system required for the energy-dependent secretion of extracellular factors such as proteases and toxins from the periplasm. Part of the pseudopilus tip complex that is critical for the recognition and binding of secretion substrates. Type II pseudopilus confers increased bacterial adhesive capabilities. This chain is Type II secretion system protein I (xcpV), found in Pseudomonas aeruginosa (strain ATCC 15692 / DSM 22644 / CIP 104116 / JCM 14847 / LMG 12228 / 1C / PRS 101 / PAO1).